The chain runs to 436 residues: Na(+)/H(+) antiporter NhaA 1 (436 aa).

The next 11 helical transmembrane spans lie at 35 to 55 (FGGG…NSPW), 80 to 100 (LATW…GLEL), 116 to 136 (ALPV…YVGV), 147 to 167 (GWAI…AVIG), 176 to 196 (AFLL…IAIF), 201 to 221 (FKLT…LLVQ), 226 to 246 (WWWA…ESGV), 283 to 303 (VSAG…SLRG), 313 to 333 (PIVV…IFGS), 354 to 374 (LLGV…IGEL), and 385 to 405 (VKAA…IVLI).

The protein belongs to the NhaA Na(+)/H(+) (TC 2.A.33) antiporter family.

Its subcellular location is the cell membrane. The catalysed reaction is Na(+)(in) + 2 H(+)(out) = Na(+)(out) + 2 H(+)(in). In terms of biological role, na(+)/H(+) antiporter that extrudes sodium in exchange for external protons. The polypeptide is Na(+)/H(+) antiporter NhaA 1 (Salinispora tropica (strain ATCC BAA-916 / DSM 44818 / JCM 13857 / NBRC 105044 / CNB-440)).